A 214-amino-acid polypeptide reads, in one-letter code: Uracil phosphoribosyltransferase (214 aa).

Residues arginine 107 and aspartate 135–threonine 143 each bind 5-phospho-alpha-D-ribose 1-diphosphate. Uracil is bound by residues isoleucine 198 and glycine 203 to alanine 205. Aspartate 204 contacts 5-phospho-alpha-D-ribose 1-diphosphate.

The protein belongs to the UPRTase family. Mg(2+) serves as cofactor.

The catalysed reaction is UMP + diphosphate = 5-phospho-alpha-D-ribose 1-diphosphate + uracil. It functions in the pathway pyrimidine metabolism; UMP biosynthesis via salvage pathway; UMP from uracil: step 1/1. With respect to regulation, allosterically activated by GTP. In terms of biological role, catalyzes the conversion of uracil and 5-phospho-alpha-D-ribose 1-diphosphate (PRPP) to UMP and diphosphate. The polypeptide is Uracil phosphoribosyltransferase (Aeropyrum pernix (strain ATCC 700893 / DSM 11879 / JCM 9820 / NBRC 100138 / K1)).